The primary structure comprises 320 residues: MRQTKTGILLANLGTPDAPTPEAVKRYLKQFLSDRRVVDTSRLLWWPLLRGVILPLRSPRVAKLYASVWMEDGSPLMVYSRQQQQALAQRLPDTPVALGMSYGSPSLESSVDELLAEHVDHIVVLPLYPQFSCSTVGAVWDELARILARKRSIPGISFIRDYADNHDYINALANSVRASFAKHGEPDLLLLSYHGIPQRYADEGDDYPQRCRTTTRELASALGMVPEKVMMTFQSRFGREPWLMPYTDETLKMLGEKGVGHIQVMCPGFAADCLETLEEIAEQNREVFLGAGGKKYEYIPALNATPEHIEMMANLVAAYR.

Histidine 194 and glutamate 275 together coordinate Fe cation.

Belongs to the ferrochelatase family. Monomer.

It is found in the cytoplasm. It carries out the reaction heme b + 2 H(+) = protoporphyrin IX + Fe(2+). Its pathway is porphyrin-containing compound metabolism; protoheme biosynthesis; protoheme from protoporphyrin-IX: step 1/1. In terms of biological role, catalyzes the ferrous insertion into protoporphyrin IX. This is Ferrochelatase from Shigella flexneri serotype 5b (strain 8401).